The primary structure comprises 141 residues: Hemoglobin subunit alpha (141 aa).

A Globin domain is found at 1-141 (VLSPADKTNV…VSTVLTSKYR (141 aa)). Ser-3 is subject to Phosphoserine. N6-succinyllysine is present on Lys-7. Thr-8 carries the post-translational modification Phosphothreonine. N6-succinyllysine is present on Lys-11. N6-acetyllysine; alternate is present on Lys-16. N6-succinyllysine; alternate is present on Lys-16. At Tyr-24 the chain carries Phosphotyrosine. The residue at position 35 (Ser-35) is a Phosphoserine. Lys-40 is subject to N6-succinyllysine. Ser-49 is modified (phosphoserine). An O2-binding site is contributed by His-58. A heme b-binding site is contributed by His-87. Ser-102 carries the post-translational modification Phosphoserine. Thr-108 is modified (phosphothreonine). A Phosphoserine modification is found at Ser-124. Thr-134 and Thr-137 each carry phosphothreonine. Ser-138 bears the Phosphoserine mark.

This sequence belongs to the globin family. As to quaternary structure, heterotetramer of two alpha chains and two beta chains. Red blood cells.

Its function is as follows. Involved in oxygen transport from the lung to the various peripheral tissues. In terms of biological role, hemopressin acts as an antagonist peptide of the cannabinoid receptor CNR1. Hemopressin-binding efficiently blocks cannabinoid receptor CNR1 and subsequent signaling. The polypeptide is Hemoglobin subunit alpha (HBA) (Martes foina (Beech marten)).